Here is a 269-residue protein sequence, read N- to C-terminus: tRNA pseudouridine synthase A (269 aa).

The active-site Nucleophile is Asp51. Residue Tyr109 coordinates substrate.

This sequence belongs to the tRNA pseudouridine synthase TruA family. As to quaternary structure, homodimer.

It carries out the reaction uridine(38/39/40) in tRNA = pseudouridine(38/39/40) in tRNA. Functionally, formation of pseudouridine at positions 38, 39 and 40 in the anticodon stem and loop of transfer RNAs. The sequence is that of tRNA pseudouridine synthase A from Aeromonas salmonicida (strain A449).